Here is a 148-residue protein sequence, read N- to C-terminus: MGGLDGEQKLLIKKLVNFRMKEGKRTRVRAIVYQTFHRPARTERDVIKLMVDAVENIKPICEVAKVGVAGTIYDVPGIVARDRQQTLAIRWILEAAFKRRISYRISLEKCSFAEILDAYQKRGSARRKRENLHGLASTNRSFAHFRWW.

The protein belongs to the universal ribosomal protein uS7 family. In terms of assembly, part of the small ribosomal subunit.

The protein localises to the mitochondrion. In terms of biological role, one of the primary rRNA binding proteins, it binds directly to 18S rRNA where it nucleates assembly of the head domain of the small subunit. The protein is Small ribosomal subunit protein uS7m (RPS7) of Arabidopsis thaliana (Mouse-ear cress).